A 364-amino-acid polypeptide reads, in one-letter code: MPKQTVALFFGGKSVEHIISIISARAVASHIDHSRYDITPLYIDRGGHWHGGACAKRILALDVAVLLRNGGQDEVFERLDEITSFDEGKRFDLTAFFDSIDVAFLTLHGSYGEDGKIQGCLDTFDIPYAGCGLTSSALSMDKALTKLCAADAGVEVAGFMSVTSADYAADPQAICNAVTERFAFPVFVKPANLGSSVGISKVHNAAELRPALDKACALDAKVLVEETITGREVEVAVLGNDDPIASVPGEIIPGSDFYDFEDKYVKSDAKLVIPADLPGEVSAAVRNAALTVFKALGCSGMARVDFFVEHGTNRIILNEINTIPGFTDISMYPMLMSASGVEFDELISRLLLLALEKRAINPKI.

In terms of domain architecture, ATP-grasp spans 146–352; it reads KLCAADAGVE…FDELISRLLL (207 aa). 179–234 contributes to the ATP binding site; that stretch reads TERFAFPVFVKPANLGSSVGISKVHNAAELRPALDKACALDAKVLVEETITGREVE. Aspartate 305, glutamate 319, and asparagine 321 together coordinate Mg(2+).

The protein belongs to the D-alanine--D-alanine ligase family. Mg(2+) is required as a cofactor. Mn(2+) serves as cofactor.

It localises to the cytoplasm. The catalysed reaction is 2 D-alanine + ATP = D-alanyl-D-alanine + ADP + phosphate + H(+). Its pathway is cell wall biogenesis; peptidoglycan biosynthesis. Functionally, cell wall formation. This chain is D-alanine--D-alanine ligase, found in Chlorobaculum parvum (strain DSM 263 / NCIMB 8327) (Chlorobium vibrioforme subsp. thiosulfatophilum).